Consider the following 343-residue polypeptide: Small ribosomal subunit biogenesis GTPase RsgA (343 aa).

A CP-type G domain is found at 116–275 (RGQLKPVAAN…LIDSPGIREF (160 aa)). Residues 163–166 (NKAD) and 217–225 (GQSGVGKSS) each bind GTP. C299, C304, H306, and C312 together coordinate Zn(2+).

The protein belongs to the TRAFAC class YlqF/YawG GTPase family. RsgA subfamily. As to quaternary structure, monomer. Associates with 30S ribosomal subunit, binds 16S rRNA. It depends on Zn(2+) as a cofactor.

The protein resides in the cytoplasm. Functionally, one of several proteins that assist in the late maturation steps of the functional core of the 30S ribosomal subunit. Helps release RbfA from mature subunits. May play a role in the assembly of ribosomal proteins into the subunit. Circularly permuted GTPase that catalyzes slow GTP hydrolysis, GTPase activity is stimulated by the 30S ribosomal subunit. The chain is Small ribosomal subunit biogenesis GTPase RsgA from Pseudomonas syringae pv. syringae (strain B728a).